The following is a 917-amino-acid chain: Major intrinsically disordered Notch2-binding receptor 1 (917 aa).

The Cytoplasmic segment spans residues 1 to 892 (MEANQEASLF…AEFRRAKVCK (892 aa)). Disordered regions lie at residues 337-367 (STYFGPTPVMGTQDTRRCPGRSSKQTPWPAK), 388-410 (PSEEKLRYPNSGSQTPNFSGPDR), 461-483 (SCTSGQHSSDTSSVGTQTEQHVL), 568-588 (ITNGVSSGKGDKCNRPENVHH), 652-687 (SEAPSDDSASPRVFRAHSGSHGPKLENSPDWCCSDA), 706-727 (TRPSSRSLTEENSATESKIASI), and 746-783 (NEEEIKDAGPANNKDWHRKSKEADRQYDIPPQHRLPKQ). Residues 461-480 (SCTSGQHSSDTSSVGTQTEQ) are compositionally biased toward polar residues. Residues 576–588 (KGDKCNRPENVHH) are compositionally biased toward basic and acidic residues. Phosphoserine is present on S712. The chain crosses the membrane as a helical span at residues 893–913 (IAALITAAACTVILVIVVPIC). Residues 914-917 (TMKS) lie on the Extracellular side of the membrane.

This sequence belongs to the MINAR family. In terms of assembly, interacts with NOTCH2; this interaction increases MINAR1 stability. Interacts (via N-terminus) with DEPTOR (via PDZ domain); this interaction may stabilize DEPTOR protein by impairing its ubiquitination. Expressed in brain and in islets of Langerhans.

It localises to the cell membrane. Functionally, intrinsically disordered protein which may negatively regulate mTOR signaling pathway by stabilizing the mTOR complex component DEPTOR. Negatively regulates angiogenesis. Negatively regulates cell growth. Negatively regulates neurite outgrowth in hippocampal neurons. The chain is Major intrinsically disordered Notch2-binding receptor 1 (Minar1) from Mus musculus (Mouse).